We begin with the raw amino-acid sequence, 272 residues long: MSAAPDAQDSTANDRFTVLIPARMASTRLPGKPLADLAGLPMVVRVAKRAVHSAADRVLVATDDARILQACAAHGVEAILTRADHASGSDRLAEACAQLGLADQHIVVNVQGDEPLIAPELIDAVAALLPARPEAGMGTAAHAIATLADYHNPQVVKVVLDARGLAQYFSRAPIPFARNPAEHGWCSAGAAPGMGTLAGHAPLRHIGIYSYRAGFLRQLTQLAPAPTETIEALEQLRALWHGHRIAVHLTAAAAGPGVDTPEDLERVRRLLL.

It belongs to the KdsB family.

The protein resides in the cytoplasm. The enzyme catalyses 3-deoxy-alpha-D-manno-oct-2-ulosonate + CTP = CMP-3-deoxy-beta-D-manno-octulosonate + diphosphate. The protein operates within nucleotide-sugar biosynthesis; CMP-3-deoxy-D-manno-octulosonate biosynthesis; CMP-3-deoxy-D-manno-octulosonate from 3-deoxy-D-manno-octulosonate and CTP: step 1/1. Its pathway is bacterial outer membrane biogenesis; lipopolysaccharide biosynthesis. Functionally, activates KDO (a required 8-carbon sugar) for incorporation into bacterial lipopolysaccharide in Gram-negative bacteria. This is 3-deoxy-manno-octulosonate cytidylyltransferase from Verminephrobacter eiseniae (strain EF01-2).